A 168-amino-acid polypeptide reads, in one-letter code: Small ribosomal subunit protein uS5 (168 aa).

Residues 13–76 (LEENVVAINR…EDAKRKLITV (64 aa)) enclose the S5 DRBM domain.

This sequence belongs to the universal ribosomal protein uS5 family. In terms of assembly, part of the 30S ribosomal subunit. Contacts proteins S4 and S8.

Functionally, with S4 and S12 plays an important role in translational accuracy. Its function is as follows. Located at the back of the 30S subunit body where it stabilizes the conformation of the head with respect to the body. This chain is Small ribosomal subunit protein uS5, found in Leuconostoc mesenteroides subsp. mesenteroides (strain ATCC 8293 / DSM 20343 / BCRC 11652 / CCM 1803 / JCM 6124 / NCDO 523 / NBRC 100496 / NCIMB 8023 / NCTC 12954 / NRRL B-1118 / 37Y).